A 318-amino-acid polypeptide reads, in one-letter code: cAMP/cGMP dual specificity phosphodiesterase MT0825 (318 aa).

Residues Asp21, His23, and Asp63 each coordinate Fe cation. Residues His23, Asp63, and 97 to 98 (NH) contribute to the AMP site. Residues Asp63, Asn97, His169, and His207 each coordinate Mn(2+). His209 is a binding site for Fe cation. An AMP-binding site is contributed by His209. The tract at residues 278–318 (PGQARRKIAESGIFIEPSRRDSLFKHPPMVLTSSAPRSPVD) is C-terminal extension.

The protein belongs to the cyclic nucleotide phosphodiesterase class-III family. As to quaternary structure, homodimer. Fe(3+) is required as a cofactor. Mn(2+) serves as cofactor.

It is found in the cytoplasm. It localises to the cell membrane. Its subcellular location is the secreted. The protein resides in the cell wall. The protein localises to the cell envelope. The catalysed reaction is a nucleoside 2',3'-cyclic phosphate + H2O = a nucleoside 3'-phosphate + H(+). The enzyme catalyses 2',3'-cyclophospho-AMP + H2O = 3'-AMP + H(+). It catalyses the reaction 2',3'-cyclophospho-GMP + H2O = 3'-GMP + H(+). It carries out the reaction a nucleoside 3',5'-cyclic phosphate + H2O = a nucleoside 5'-phosphate + H(+). The catalysed reaction is 3',5'-cyclic AMP + H2O = AMP + H(+). The enzyme catalyses 3',5'-cyclic GMP + H2O = GMP + H(+). In terms of biological role, cyclic nucleotide phosphodiesterase with a dual-specificity for the second messengers cAMP and cGMP. The sequence is that of cAMP/cGMP dual specificity phosphodiesterase MT0825 from Mycobacterium tuberculosis (strain CDC 1551 / Oshkosh).